Here is a 186-residue protein sequence, read N- to C-terminus: Periplasmic nitrate reductase, electron transfer subunit (186 aa).

The N-terminal stretch at 1–20 (MKTSKLNFLTLVASTGLALA) is a signal peptide. Positions 87, 102, 105, 106, 123, 144, 147, and 148 each coordinate heme c.

This sequence belongs to the NapB family. As to quaternary structure, component of the periplasmic nitrate reductase NapAB complex composed of NapA and NapB. Binds 2 heme C groups per subunit.

Its subcellular location is the periplasm. Its function is as follows. Electron transfer subunit of the periplasmic nitrate reductase complex NapAB. Transfers electrons to NapA subunit, thus allowing electron flow between membrane and periplasm. Essential for periplasmic nitrate reduction with nitrate as the terminal electron acceptor. The chain is Periplasmic nitrate reductase, electron transfer subunit from Wolinella succinogenes (strain ATCC 29543 / DSM 1740 / CCUG 13145 / JCM 31913 / LMG 7466 / NCTC 11488 / FDC 602W) (Vibrio succinogenes).